Here is a 441-residue protein sequence, read N- to C-terminus: Probable magnesium transporter NIPA8 (441 aa).

Residues 1 to 4 (MGEW) lie on the Extracellular side of the membrane. Residues 5 to 25 (VIGAFINIFGSVAINFGTNLL) traverse the membrane as a helical segment. At 26-56 (KLGHNERERLALQDGGGKMPLKPIIHNQTWR) the chain is on the cytoplasmic side. The chain crosses the membrane as a helical span at residues 57–77 (VGILVFLLGNCLNFISFGYAA). Topologically, residues 78 to 79 (QS) are extracellular. Residues 80 to 100 (LLAALGSIQFVSNIAFAYVVL) traverse the membrane as a helical segment. The Cytoplasmic portion of the chain corresponds to 101–105 (NKMVT). The chain crosses the membrane as a helical span at residues 106–126 (VKVLVATAFIVLGNVFLVAFG). Residues 127 to 144 (NHQSPVFTPEQLAEKYSN) lie on the Extracellular side of the membrane. Residues 145 to 165 (VTFLVYCGILILIVAVHHFLY) form a helical membrane-spanning segment. The Cytoplasmic portion of the chain corresponds to 166 to 184 (RKGEVLISTPGQEISSYWK). A helical transmembrane segment spans residues 185–205 (MLLPFSYAVVSGAIGSCSVLF). The Extracellular portion of the chain corresponds to 206-222 (AKSLSNLLRLAMSSSYQ). The chain crosses the membrane as a helical span at residues 223-243 (LHSWFTYSMLLLFLSTAGFWM). Over 244–255 (TRLNEGLSLYDA) the chain is Cytoplasmic. Residues 256 to 276 (ILIVPMFQIAWTFFSICTGCI) traverse the membrane as a helical segment. Residues 277–288 (YFQEFQVFDALR) lie on the Extracellular side of the membrane. The helical transmembrane segment at 289–309 (TTMFILGMMCVFIGISLLAPD) threads the bilayer. The Cytoplasmic portion of the chain corresponds to 310–441 (DTRGNETKDN…MLEKTISSKA (132 aa)). The disordered stretch occupies residues 313-347 (GNETKDNSSSLDSIVSSSVPTEEDRLIPQSSEDGH). Low complexity predominate over residues 320-330 (SSSLDSIVSSS). The span at 334-347 (EEDRLIPQSSEDGH) shows a compositional bias: basic and acidic residues.

This sequence belongs to the NIPA (TC 2.A.7) family. Homodimer.

The protein resides in the cell membrane. The protein localises to the early endosome. Its function is as follows. Acts as a Mg(2+) transporter. Can also transport other divalent cations such as Fe(2+), Sr(2+), Ba(2+), Mn(2+) and Co(2+) but to a much less extent than Mg(2+). This chain is Probable magnesium transporter NIPA8, found in Arabidopsis thaliana (Mouse-ear cress).